A 76-amino-acid polypeptide reads, in one-letter code: Large ribosomal subunit protein bL31 (76 aa).

Zn(2+) contacts are provided by C16, C18, C36, and C39.

This sequence belongs to the bacterial ribosomal protein bL31 family. Type A subfamily. As to quaternary structure, part of the 50S ribosomal subunit. The cofactor is Zn(2+).

Binds the 23S rRNA. This chain is Large ribosomal subunit protein bL31, found in Syntrophobacter fumaroxidans (strain DSM 10017 / MPOB).